The primary structure comprises 286 residues: Probable ketoamine kinase YniA (286 aa).

An ATP-binding site is contributed by 91–93 (DYL). Residue D193 is the Proton acceptor of the active site.

The protein belongs to the fructosamine kinase family.

In terms of biological role, ketoamine kinase that phosphorylates ketoamines on the third carbon of the sugar moiety to generate ketoamine 3-phosphate. This is Probable ketoamine kinase YniA (yniA) from Escherichia coli O157:H7.